Consider the following 173-residue polypeptide: C-phycocyanin-2 beta subunit (173 aa).

An N4-methylasparagine modification is found at Asn-73. Positions 83 and 154 each coordinate (2R,3E)-phycocyanobilin.

It belongs to the phycobiliprotein family. Heterodimer of an alpha and a beta subunit, which further assembles into trimers and the trimers into hexamers. Contains two covalently linked bilin chromophores.

It is found in the cellular thylakoid membrane. Light-harvesting photosynthetic bile pigment-protein from the phycobiliprotein complex (phycobilisome, PBS). Phycocyanin is the major phycobiliprotein in the PBS rod. This chain is C-phycocyanin-2 beta subunit (cpcB2), found in Synechococcus sp. (strain ATCC 27144 / PCC 6301 / SAUG 1402/1) (Anacystis nidulans).